Consider the following 216-residue polypeptide: Urease accessory protein UreG (216 aa).

25–32 (GPVGSGKT) contacts GTP.

Belongs to the SIMIBI class G3E GTPase family. UreG subfamily. Homodimer. UreD, UreF and UreG form a complex that acts as a GTP-hydrolysis-dependent molecular chaperone, activating the urease apoprotein by helping to assemble the nickel containing metallocenter of UreC. The UreE protein probably delivers the nickel.

Its subcellular location is the cytoplasm. Its function is as follows. Facilitates the functional incorporation of the urease nickel metallocenter. This process requires GTP hydrolysis, probably effectuated by UreG. The protein is Urease accessory protein UreG of Burkholderia thailandensis (strain ATCC 700388 / DSM 13276 / CCUG 48851 / CIP 106301 / E264).